Here is a 644-residue protein sequence, read N- to C-terminus: MKANGLDNDPARTGMERTDIDSEHPEAQPLLNNNHRTLGAGSANGPAVNEGRDIESDGFIKDSLFQIRKGYRIFIHNSKWILNILILINTIWLVTTLISDFFFNINILFGFSNRYASFNDLTLIFISIIANSFNLWFNKLGLYSALDYSLNVTLCVLTLFNLALTYLIKYTRQRIGFVGTFTYLWTSFSFFIGAILDWYLLFYNNSINEPLEERRIDDANISTFNENHTNSTENRDRSQYGSGSPTPTHRSQLVQNKHTLTEWVSIGFRNTIKFLILIFFALFTLNTLLTTLDTYRLTHKLPITVQSPSYEAFHYVDAAKTYQLHITCYGDVFDQENNTDLSENKKQPIILFEHGGYDTGYLSATWIEELYHLDKIQRYCLYDRPGYGLSDSPPAPISIAMVAESLRYALIKDAKIKGPFTTVGYDLGGLFTRVFTAKNVDIVDSMMLVESWHEELLLKNYIQRLLPPGRGDGDDGDDGNGNDGDGRNHDKTWLPSEIERHNEFRLWWKGIWSSLGWRLQTSWLLAHHGSKERIYGRDMKYQGRFLRSKFLESVTSSILSYRDVTNNAESLQNVKTSIVSSKEMVKKSALWGDWQRDLTKISHKTQEWKIVEGGHEIYKYGLGKQQTQEVLLRLIGELGKLTED.

Positions 1–35 (MKANGLDNDPARTGMERTDIDSEHPEAQPLLNNNH) are disordered. Topologically, residues 1 to 90 (MKANGLDNDP…ILNILILINT (90 aa)) are cytoplasmic. Residues 14–26 (GMERTDIDSEHPE) show a composition bias toward basic and acidic residues. Residues serine 22, serine 56, and serine 63 each carry the phosphoserine modification. A helical transmembrane segment spans residues 91 to 111 (IWLVTTLISDFFFNINILFGF). Topologically, residues 112–122 (SNRYASFNDLT) are vacuolar. A helical membrane pass occupies residues 123–143 (LIFISIIANSFNLWFNKLGLY). Topologically, residues 144–147 (SALD) are cytoplasmic. Residues 148-168 (YSLNVTLCVLTLFNLALTYLI) form a helical membrane-spanning segment. Topologically, residues 169 to 174 (KYTRQR) are vacuolar. A helical membrane pass occupies residues 175-195 (IGFVGTFTYLWTSFSFFIGAI). Over 196-271 (LDWYLLFYNN…EWVSIGFRNT (76 aa)) the chain is Cytoplasmic. The interval 225 to 251 (NENHTNSTENRDRSQYGSGSPTPTHRS) is disordered. Positions 239–251 (QYGSGSPTPTHRS) are enriched in polar residues. Serine 244 is subject to Phosphoserine. The chain crosses the membrane as a helical span at residues 272 to 292 (IKFLILIFFALFTLNTLLTTL). Residues 293–644 (DTYRLTHKLP…IGELGKLTED (352 aa)) are Vacuolar-facing. In terms of domain architecture, AB hydrolase-1 spans 348–619 (PIILFEHGGY…IVEGGHEIYK (272 aa)). The tract at residues 469 to 492 (GRGDGDDGDDGNGNDGDGRNHDKT) is disordered.

It localises to the vacuole membrane. This is an uncharacterized protein from Saccharomyces cerevisiae (strain ATCC 204508 / S288c) (Baker's yeast).